The primary structure comprises 379 residues: Chaperone protein DnaJ (379 aa).

Residues 5–70 (DYYEILEVSR…EKRAAYDRYG (66 aa)) form the J domain. The segment at 135 to 213 (GIKVPISYVT…CGGSGRVRNE (79 aa)) adopts a CR-type zinc-finger fold. Positions 148, 151, 165, 168, 187, 190, 201, and 204 each coordinate Zn(2+). CXXCXGXG motif repeat units lie at residues 148 to 155 (CSSCSGIG), 165 to 172 (CGNCNGAG), 187 to 194 (CNVCNGEG), and 201 to 208 (CRRCGGSG).

This sequence belongs to the DnaJ family. As to quaternary structure, homodimer. The cofactor is Zn(2+).

It is found in the cytoplasm. In terms of biological role, participates actively in the response to hyperosmotic and heat shock by preventing the aggregation of stress-denatured proteins and by disaggregating proteins, also in an autonomous, DnaK-independent fashion. Unfolded proteins bind initially to DnaJ; upon interaction with the DnaJ-bound protein, DnaK hydrolyzes its bound ATP, resulting in the formation of a stable complex. GrpE releases ADP from DnaK; ATP binding to DnaK triggers the release of the substrate protein, thus completing the reaction cycle. Several rounds of ATP-dependent interactions between DnaJ, DnaK and GrpE are required for fully efficient folding. Also involved, together with DnaK and GrpE, in the DNA replication of plasmids through activation of initiation proteins. The chain is Chaperone protein DnaJ from Anaplasma marginale (strain Florida).